Consider the following 454-residue polypeptide: Isthmin-1 (454 aa).

The N-terminal stretch at 1–29 is a signal peptide; that stretch reads MVRLAAELLLLLGLLLLTLHITVLRGSGA. Disordered stretches follow at residues 29–93, 125–144, and 161–209; these read ASDR…PRSF, PDSE…WSLP, and TNSG…STDG. Over residues 38 to 55 the composition is skewed to polar residues; that stretch reads GNNNLNLESDSTSETSFP. Over residues 128–137 the composition is skewed to basic and acidic residues; that stretch reads EAEKDQHPEN. Positions 208-252 constitute a TSP type-1 domain; the sequence is DGEGDWSLWSVCSVTCGNGNQKRTRSCGYACIATESRTCDRPNCP. 3 cysteine pairs are disulfide-bonded: C219–C246, C223–C251, and C234–C238. The AMOP domain occupies 279–442; it reads LFEVDMDSCE…QKCTESPSDE (164 aa).

It belongs to the isthmin family. In terms of assembly, interacts with integrin ITGAV/ITGB5.

The protein localises to the secreted. Acts as an angiogenesis inhibitor. The protein is Isthmin-1 (Ism1) of Mus musculus (Mouse).